The sequence spans 158 residues: Succinate dehydrogenase [ubiquinone] cytochrome b small subunit, mitochondrial (158 aa).

The transit peptide at M1–H55 directs the protein to the mitochondrion. At S56–S62 the chain is on the mitochondrial matrix side. Residues L63 to L84 form a helical membrane-spanning segment. Topologically, residues N85–A89 are mitochondrial intermembrane. The helical transmembrane segment at M90–V110 threads the bilayer. H101 is a binding site for heme b. At T111–V119 the chain is on the mitochondrial matrix side. Y113 lines the a ubiquinone pocket. The helical transmembrane segment at Q120–F141 threads the bilayer. At N142–L158 the chain is on the mitochondrial intermembrane side.

The protein belongs to the CybS family. Component of complex II composed of four subunits: the flavoprotein (FP) SDHA, iron-sulfur protein (IP) SDHB, and a cytochrome b560 composed of SDHC and SDHD.

It localises to the mitochondrion inner membrane. It participates in carbohydrate metabolism; tricarboxylic acid cycle. Membrane-anchoring subunit of succinate dehydrogenase (SDH) that is involved in complex II of the mitochondrial electron transport chain and is responsible for transferring electrons from succinate to ubiquinone (coenzyme Q). SDH also oxidizes malate to the non-canonical enol form of oxaloacetate, enol-oxaloacetate. Enol-oxaloacetate, which is a potent inhibitor of the succinate dehydrogenase activity, is further isomerized into keto-oxaloacetate. This is Succinate dehydrogenase [ubiquinone] cytochrome b small subunit, mitochondrial (SDHD) from Bos taurus (Bovine).